The primary structure comprises 292 residues: 4-hydroxybenzoate octaprenyltransferase (292 aa).

The next 9 membrane-spanning stretches (helical) occupy residues 24-44 (IGTLLLLWPTYWALWLANAGM), 47-67 (LTNFIVFTLGVVIMRSAGCVI), 97-117 (AISLFILLITVAFLLVLMLSV), 119-139 (TILLSFGALALAFCYPFMKRY), 145-165 (VVLGAAFGWAIPMAFMASINA), 171-191 (WLLFIANICWTVAYDTMYAMV), 214-234 (HIIGLLNLAFIALMLSIGALN), 238-258 (LSYWLGLSVAIVLLVYQQVLI), and 270-290 (FLNNHYVGLAFFIGLLFSYPV).

Belongs to the UbiA prenyltransferase family. Requires Mg(2+) as cofactor.

The protein resides in the cell inner membrane. It catalyses the reaction all-trans-octaprenyl diphosphate + 4-hydroxybenzoate = 4-hydroxy-3-(all-trans-octaprenyl)benzoate + diphosphate. Its pathway is cofactor biosynthesis; ubiquinone biosynthesis. Functionally, catalyzes the prenylation of para-hydroxybenzoate (PHB) with an all-trans polyprenyl group. Mediates the second step in the final reaction sequence of ubiquinone-8 (UQ-8) biosynthesis, which is the condensation of the polyisoprenoid side chain with PHB, generating the first membrane-bound Q intermediate 3-octaprenyl-4-hydroxybenzoate. The sequence is that of 4-hydroxybenzoate octaprenyltransferase from Pseudoalteromonas translucida (strain TAC 125).